Consider the following 151-residue polypeptide: Large ribosomal subunit protein uL22 (151 aa).

It belongs to the universal ribosomal protein uL22 family. As to quaternary structure, part of the 50S ribosomal subunit.

In terms of biological role, this protein binds specifically to 23S rRNA. It makes multiple contacts with different domains of the 23S rRNA in the assembled 50S subunit and ribosome. Its function is as follows. The globular domain of the protein is located near the polypeptide exit tunnel on the outside of the subunit, while an extended beta-hairpin is found that lines the wall of the exit tunnel in the center of the 70S ribosome. The polypeptide is Large ribosomal subunit protein uL22 (Thermoplasma acidophilum (strain ATCC 25905 / DSM 1728 / JCM 9062 / NBRC 15155 / AMRC-C165)).